Reading from the N-terminus, the 661-residue chain is Transcription factor ccg-8 (661 aa).

Over residues 1–11 (MEHHHHHRHMH) the composition is skewed to basic residues. Disordered stretches follow at residues 1–69 (MEHH…QADN), 107–243 (SASS…LDDP), 255–279 (LKTD…DQNQ), and 354–398 (RTKS…RRTS). Low complexity-rich tracts occupy residues 23–43 (HQQY…QHQQ) and 107–140 (SASS…SSNR). Polar residues predominate over residues 173 to 187 (DHSLPSIASLNVGSS). Positions 192 to 203 (QPTPTPQPPPKF) are enriched in pro residues. Over residues 357–366 (SSSDTRESGQ) the composition is skewed to basic and acidic residues.

In terms of biological role, transcription factor that plays a pivotal role in azole adaptive responses by regulating the drug accumulation in the cells. Affects the transcriptional responses to ketoconazole of many genes, including the target gene (erg11), an azole transporter gene (cdr4), a hexose transporter gene (hxt13), a stress response gene (kts-1), two transcription factor genes (named kts-2 and fsd-1/ndt80). Also regulates phospholipid synthesis that is not involved in azole resistance. This is Transcription factor ccg-8 from Neurospora crassa (strain ATCC 24698 / 74-OR23-1A / CBS 708.71 / DSM 1257 / FGSC 987).